Reading from the N-terminus, the 257-residue chain is Snake venom serine protease KN10 (257 aa).

A signal peptide spans 1–18 (MVLIRVLANLLILQLSYA). A propeptide spanning residues 19 to 24 (QKSSEL) is cleaved from the precursor. The Peptidase S1 domain occupies 25 to 248 (VVGGDECNIN…HLDWIKSIIA (224 aa)). 5 cysteine pairs are disulfide-bonded: cysteine 31/cysteine 162, cysteine 49/cysteine 65, cysteine 141/cysteine 209, cysteine 173/cysteine 188, and cysteine 199/cysteine 224. Residue histidine 64 is the Charge relay system of the active site. N-linked (GlcNAc...) asparagine glycosylation is present at asparagine 102. Aspartate 109 (charge relay system) is an active-site residue. 2 N-linked (GlcNAc...) asparagine glycosylation sites follow: asparagine 120 and asparagine 121. The active-site Charge relay system is serine 203.

The protein belongs to the peptidase S1 family. Snake venom subfamily. Monomer. In terms of tissue distribution, expressed by the venom gland.

It localises to the secreted. In terms of biological role, snake venom serine protease that may act in the hemostasis system of the prey. The polypeptide is Snake venom serine protease KN10 (Trimeresurus stejnegeri (Chinese green tree viper)).